The primary structure comprises 246 residues: Sugar fermentation stimulation protein homolog (246 aa).

This sequence belongs to the SfsA family.

In Prochlorococcus marinus (strain MIT 9312), this protein is Sugar fermentation stimulation protein homolog.